Reading from the N-terminus, the 839-residue chain is Amyloid-beta A4 precursor protein-binding family A member 1 (839 aa).

Disordered regions lie at residues 1-118, 235-346, and 362-437; these read MNHL…DESA, RLHH…EKRD, and VKTR…ESRK. Over residues 23-38 the composition is skewed to acidic residues; the sequence is ESVEADLEHPEVEEEQ. Serine 79 carries the post-translational modification Phosphoserine. 2 stretches are compositionally biased toward basic and acidic residues: residues 103 to 112 and 237 to 255; these read DGYEAERAQD and HHYD…KEAE. Residues 227 to 315 form a munc-18-1 binding region; sequence YRQEALGARL…TPGGGHPDSP (89 aa). Phosphoserine occurs at positions 243, 247, 249, 264, 281, and 286. Threonine 306 carries the phosphothreonine modification. Residues serine 314 and serine 369 each carry the phosphoserine modification. Threonine 372 is subject to Phosphothreonine. The tract at residues 375–438 is LIN-2/CASK binding; it reads EPKEPIWVMR…ASTNKESRKS (64 aa). A compositionally biased stretch (basic and acidic residues) spans 389–400; the sequence is PTRDCDDQRPVD. Positions 401–417 are enriched in low complexity; it reads GDSPSPGSSSPLGAESS. Serine 403, serine 405, serine 410, and serine 570 each carry phosphoserine. The PID domain occupies 459 to 645; that stretch reads DGIIFAANYL…LLNTQDMYND (187 aa). The interval 628-643 is autoinhibitory helix linker; it reads LSQKEYSDLLNTQDMY. PDZ domains lie at 658–744 and 749–824; these read DVFI…IVRC and TVLI…TMPA.

In terms of assembly, part of a multimeric complex containing STXBP1 and STX1A. Interacts with STXBP1. Component of the brain-specific heterotrimeric complex (LIN-10-LIN-2-LIN-7 complex) composed of at least APBA1, CASK, and LIN7, which associates with the motor protein KIF17 to transport vesicles along microtubules. Within the complex, interacts (via PDZ domain) with the motor protein KIF17; the interaction is direct and is required for association of KIF17 with the cargo that is to be transported. Binds to the cytoplasmic domain of amyloid protein (APP). Interacts (via PDZ 1 and 2 domains) with FSPB. Isoform 2 interacts (via its truncated PID domain) with active, GTP-bound RAB6A and RAB6B. As to expression, brain. Detected in the cerebellum, hippocampus, olfactory system, piriform and entorhinal cortex, supraoptic nucleus of the hypothalamus, substantia nigra, and other mesencephalic areas.

The protein resides in the cytoplasm. Its subcellular location is the perinuclear region. It localises to the nucleus. The protein localises to the golgi apparatus. In terms of biological role, putative function in synaptic vesicle exocytosis by binding to Munc18-1, an essential component of the synaptic vesicle exocytotic machinery. May modulate processing of the amyloid-beta precursor protein (APP) and hence formation of APP-beta. The protein is Amyloid-beta A4 precursor protein-binding family A member 1 (Apba1) of Rattus norvegicus (Rat).